A 708-amino-acid chain; its full sequence is Solute carrier family 15 member 1 (708 aa).

A helical transmembrane segment spans residues 1 to 21; that stretch reads MGMSKSYGCFGYPLSIFFIVV. Topologically, residues 22-53 are extracellular; the sequence is NEFCERFSYYGMRALLILYFRRFIGWDDNLST. Asn50 carries an N-linked (GlcNAc...) asparagine glycan. A helical membrane pass occupies residues 54 to 74; it reads AIYHTFVALCYLTPILGALIA. Residues 75–82 lie on the Cytoplasmic side of the membrane; it reads DSWLGKFK. A helical transmembrane segment spans residues 83 to 103; that stretch reads TIVSLSIVYTIGQAVTAVSSI. The Extracellular portion of the chain corresponds to 104-118; the sequence is NDLTDYNKDGTPDNL. A glycan (N-linked (GlcNAc...) asparagine) is linked at Asn117. A helical transmembrane segment spans residues 119 to 139; that stretch reads SVHVALSMIGLALIALGTGGI. The Cytoplasmic segment spans residues 140–161; sequence KPCVSAFGGDQFEEGQEKQRNR. The chain crosses the membrane as a helical span at residues 162–182; that stretch reads FFSIFYLAINAGSLISTIVTP. Residues 183-198 are Extracellular-facing; it reads MLRVHECGIYSQKACY. A helical membrane pass occupies residues 199 to 219; that stretch reads PLAFGVPAALMAVSLIVFVIG. Residues 220–276 lie on the Cytoplasmic side of the membrane; that stretch reads SGMYKKFQPQGNVMGKVVKCIGFALKNRFRHRSKQFPKREHWLDWAKEKYDERLISQ. Residues 277–297 traverse the membrane as a helical segment; it reads IKMVTKVMFLYIPLPMFWALF. The Extracellular portion of the chain corresponds to 298 to 327; sequence DQQGSRWTLQATAMSGKIGLLEVQPDQMQT. The chain crosses the membrane as a helical span at residues 328–348; it reads VNAILIVVMVPIMDAVVYPLI. The Cytoplasmic portion of the chain corresponds to 349 to 361; the sequence is AKCGFNFTSLKRM. A helical transmembrane segment spans residues 362 to 382; the sequence is TVGMFLASMAFVMAAIVQLEI. The Extracellular portion of the chain corresponds to 383–584; the sequence is DKTLPVFPKQ…ISPNTVNMAL (202 aa). The extracellular domain (ECD) stretch occupies residues 383 to 585; the sequence is DKTLPVFPKQ…SPNTVNMALQ (203 aa). N-linked (GlcNAc...) asparagine glycosylation is found at Asn408, Asn439, Asn495, Asn499, Asn509, Asn514, Asn527, and Asn539. The chain crosses the membrane as a helical span at residues 585–605; the sequence is QIPQYFLITCGEVVFSVTGLE. At 606 to 619 the chain is on the cytoplasmic side; it reads FSYSQAPSNMKSVL. A helical transmembrane segment spans residues 620–640; sequence QAGWLLTVAVGNIIVLIVAGA. The Extracellular segment spans residues 641 to 645; that stretch reads GQFSE. A helical transmembrane segment spans residues 646–666; sequence QWAEYILFAALLLVVCVIFAI. The Cytoplasmic portion of the chain corresponds to 667–708; it reads MARFYTYVNPAEIEAQFDDDEKKNLEKMNVYSTVTPVSQTQM.

This sequence belongs to the major facilitator superfamily. Proton-dependent oligopeptide transporter (POT/PTR) (TC 2.A.17) family. In terms of assembly, interacts (via extracellular domain region) with trypsin.

It localises to the apical cell membrane. The catalysed reaction is a dipeptide(out) + H(+)(out) = a dipeptide(in) + H(+)(in). It carries out the reaction an L-amino acid tripeptide(out) + H(+)(out) = an L-amino acid tripeptide(in) + H(+)(in). It catalyses the reaction L-alanyl-L-lysine(out) + H(+)(out) = L-alanyl-L-lysine(in) + H(+)(in). The enzyme catalyses L-alanyl-L-proline(out) + H(+)(out) = L-alanyl-L-proline(in) + H(+)(in). The catalysed reaction is L-alanyl-L-valine(out) + H(+)(out) = L-alanyl-L-valine(in) + H(+)(in). It carries out the reaction carnosine(out) + H(+)(out) = carnosine(in) + H(+)(in). It catalyses the reaction glycyl-L-glutamine(out) + H(+)(out) = glycyl-L-glutamine(in) + H(+)(in). The enzyme catalyses glycyl-L-leucine(out) + H(+)(out) = glycyl-L-leucine(in) + H(+)(in). The catalysed reaction is glycyl-L-proline(out) + H(+)(out) = glycyl-L-proline(in) + H(+)(in). It carries out the reaction glycyl-sarcosine(out) + H(+)(out) = glycyl-sarcosine(in) + H(+)(in). It catalyses the reaction L-leucyl-L-leucine(out) + H(+)(out) = L-leucyl-L-leucine(in) + H(+)(in). The enzyme catalyses L-leucyl-L-proline(out) + H(+)(out) = L-leucyl-L-proline(in) + H(+)(in). The catalysed reaction is L-phenylalanyl-L-leucine(out) + H(+)(out) = L-phenylalanyl-L-leucine(in) + H(+)(in). It carries out the reaction L-phenylalanyl-L-phenylalanine(out) + H(+)(out) = L-phenylalanyl-L-phenylalanine(in) + H(+)(in). It catalyses the reaction L-lysyl-glycine(out) + H(+)(out) = L-lysyl-glycine(in) + H(+)(in). The enzyme catalyses L-tyrosylglycine(out) + H(+)(out) = L-tyrosylglycine(in) + H(+)(in). The catalysed reaction is L-alanyl-L-aspartate(out) + 2 H(+)(out) = L-alanyl-L-aspartate(in) + 2 H(+)(in). It carries out the reaction L-aspartyl-glycine(out) + 2 H(+)(out) = L-aspartyl-glycine(in) + 2 H(+)(in). It catalyses the reaction glycyl-L-aspartate(out) + 2 H(+)(out) = glycyl-L-aspartate(in) + 2 H(+)(in). The enzyme catalyses glycyl-L-glutamate(out) + 2 H(+)(out) = glycyl-L-glutamate(in) + 2 H(+)(in). The catalysed reaction is L-alanyl-L-leucyl-L-alanine(out) + H(+)(out) = L-alanyl-L-leucyl-L-alanine(in) + H(+)(in). It carries out the reaction L-alanyl-L-prolylglycine(out) + H(+)(out) = L-alanyl-L-prolylglycine(in) + H(+)(in). It catalyses the reaction glycylglycyl-L-isoleucine(out) + H(+)(out) = glycylglycyl-L-isoleucine(in) + H(+)(in). The enzyme catalyses glycylglycyl-L-proline(out) + H(+)(out) = glycylglycyl-L-proline(in) + H(+)(in). The catalysed reaction is L-methionyl-L-phenylalanyl-L-methionine(out) + H(+)(out) = L-methionyl-L-phenylalanyl-L-methionine(in) + H(+)(in). It carries out the reaction N-acetyl-D-muramoyl-L-alanyl-D-isoglutamine(out) + 2 H(+)(out) = N-acetyl-D-muramoyl-L-alanyl-D-isoglutamine(in) + 2 H(+)(in). It catalyses the reaction N(alpha)-formyl-L-methionyl-L-leucyl-L-phenylalanine(out) + 2 H(+)(out) = N(alpha)-formyl-L-methionyl-L-leucyl-L-phenylalanine(in) + 2 H(+)(in). Its function is as follows. Electrogenic proton-coupled amino-acid transporter that transports oligopeptides of 2 to 4 amino acids with a preference for dipeptides. Transports neutral and monovalently charged peptides with a proton to peptide stoichiometry of 1:1 or 2:1. Primarily responsible for the absorption of dietary di- and tripeptides from the small intestinal lumen. Mediates transepithelial transport of muramyl and N-formylated bacterial dipeptides contributing to recognition of pathogenic bacteria by the mucosal immune system. The chain is Solute carrier family 15 member 1 (SLC15A1) from Canis lupus familiaris (Dog).